Reading from the N-terminus, the 232-residue chain is MSDNLKSYQDNHIENEDEEIYERSNGKGKELVDFGKKREPLIHNHEVLNTMQSSVKTLLSSLGEDPDREGLLKTPLRMSKALLFFTQGYEQSVDEVIGEAIFNENHHEMVVVRDIDIFSLCEHHMVPFHGKCHIGYIPDQKVLGLSKLARVAEIFARRLQVQERLTRQIAQAIQAHLNPMGVAVVIEASHMCMVMRGVQKPGASTVTSSVCGIFEKDSRTRAEFFSLIKSNK.

Residues 1 to 24 (MSDNLKSYQDNHIENEDEEIYERS) are disordered. Zn(2+)-binding residues include C121, H124, and C192.

This sequence belongs to the GTP cyclohydrolase I family. In terms of assembly, toroid-shaped homodecamer, composed of two pentamers of five dimers.

It carries out the reaction GTP + H2O = 7,8-dihydroneopterin 3'-triphosphate + formate + H(+). It participates in cofactor biosynthesis; 7,8-dihydroneopterin triphosphate biosynthesis; 7,8-dihydroneopterin triphosphate from GTP: step 1/1. First enzyme in the biosynthesis of tetrahydrobiopterin (BH4). Catalyzes the conversion of GTP into dihydroneopterin triphosphate (7,8-dihydroneopterin 3'-triphosphate), which is subsequently catalyzed by 6-pyruvoyltetrahydropterin synthase (ptsA) and sepiapterin reductase (sprA). This is GTP cyclohydrolase 1 (gchA) from Dictyostelium discoideum (Social amoeba).